The primary structure comprises 167 residues: Peptidyl-prolyl cis-trans isomerase-like 3 (167 aa).

Positions 1–153 (MSVTLHTNLG…QEIKLLNVTV (153 aa)) constitute a PPIase cyclophilin-type domain.

Belongs to the cyclophilin-type PPIase family. PPIL3 subfamily.

The catalysed reaction is [protein]-peptidylproline (omega=180) = [protein]-peptidylproline (omega=0). Functionally, PPIases accelerate the folding of proteins. It catalyzes the cis-trans isomerization of proline imidic peptide bonds in oligopeptides. This Cryptococcus neoformans var. neoformans serotype D (strain B-3501A) (Filobasidiella neoformans) protein is Peptidyl-prolyl cis-trans isomerase-like 3 (CYP10).